The primary structure comprises 317 residues: Probable deoxyhypusine synthase 1 (317 aa).

Residue Lys-285 is the Nucleophile of the active site.

This sequence belongs to the deoxyhypusine synthase family. It depends on NAD(+) as a cofactor.

It catalyses the reaction [eIF5A protein]-L-lysine + spermidine = [eIF5A protein]-deoxyhypusine + propane-1,3-diamine. The protein operates within protein modification; eIF5A hypusination. Functionally, catalyzes the NAD-dependent oxidative cleavage of spermidine and the subsequent transfer of the butylamine moiety of spermidine to the epsilon-amino group of a specific lysine residue of the eIF-5A precursor protein to form the intermediate deoxyhypusine residue. The chain is Probable deoxyhypusine synthase 1 (dys1) from Methanosarcina acetivorans (strain ATCC 35395 / DSM 2834 / JCM 12185 / C2A).